The primary structure comprises 495 residues: Glutamyl-tRNA(Gln) amidotransferase subunit A (495 aa).

Active-site charge relay system residues include lysine 79 and serine 159. The active-site Acyl-ester intermediate is serine 183.

It belongs to the amidase family. GatA subfamily. Heterotrimer of A, B and C subunits.

The catalysed reaction is L-glutamyl-tRNA(Gln) + L-glutamine + ATP + H2O = L-glutaminyl-tRNA(Gln) + L-glutamate + ADP + phosphate + H(+). In terms of biological role, allows the formation of correctly charged Gln-tRNA(Gln) through the transamidation of misacylated Glu-tRNA(Gln) in organisms which lack glutaminyl-tRNA synthetase. The reaction takes place in the presence of glutamine and ATP through an activated gamma-phospho-Glu-tRNA(Gln). The chain is Glutamyl-tRNA(Gln) amidotransferase subunit A from Gluconobacter oxydans (strain 621H) (Gluconobacter suboxydans).